A 1226-amino-acid chain; its full sequence is Chromosome partition protein Smc (1226 aa).

32–39 contributes to the ATP binding site; that stretch reads PNGCGKSN. Coiled-coil stretches lie at residues 173-231 and 269-491; these read ITKF…IKRN and NSLE…SKSL. The SMC hinge domain occupies 527–635; the sequence is YQLLGNLIQC…FDGYFIASKF (109 aa). 3 coiled-coil regions span residues 679–741, 775–965, and 1006–1078; these read QGVV…AAKK, MLES…LREA, and HRRY…KSKE.

It belongs to the SMC family. As to quaternary structure, homodimer.

The protein resides in the cytoplasm. Its function is as follows. Required for chromosome condensation and partitioning. The polypeptide is Chromosome partition protein Smc (Halobacteriovorax marinus (strain ATCC BAA-682 / DSM 15412 / SJ) (Bacteriovorax marinus)).